The sequence spans 170 residues: Shikimate kinase (170 aa).

11–16 (LSGKST) is an ATP binding site. S15 is a Mg(2+) binding site. Substrate is bound by residues D33, R57, and G79. R119 contributes to the ATP binding site. Residue R137 coordinates substrate.

It belongs to the shikimate kinase family. In terms of assembly, monomer. Mg(2+) is required as a cofactor.

Its subcellular location is the cytoplasm. It carries out the reaction shikimate + ATP = 3-phosphoshikimate + ADP + H(+). It functions in the pathway metabolic intermediate biosynthesis; chorismate biosynthesis; chorismate from D-erythrose 4-phosphate and phosphoenolpyruvate: step 5/7. Functionally, catalyzes the specific phosphorylation of the 3-hydroxyl group of shikimic acid using ATP as a cosubstrate. The protein is Shikimate kinase of Clostridium botulinum (strain 657 / Type Ba4).